The primary structure comprises 90 residues: Small ribosomal subunit protein uS15c (90 aa).

The protein belongs to the universal ribosomal protein uS15 family. As to quaternary structure, part of the 30S ribosomal subunit.

The protein localises to the plastid. Its subcellular location is the chloroplast. The polypeptide is Small ribosomal subunit protein uS15c (rps15) (Mesostigma viride (Green alga)).